Consider the following 1274-residue polypeptide: DENN domain-containing protein 5B (1274 aa).

Position 2 is an N-acetylserine (Ser2). Positions 39–244 constitute a uDENN domain; it reads DELAGENFDQ…EVPLPPPGRS (206 aa). Ser49 and Ser178 each carry phosphoserine. The region spanning 263–399 is the cDENN domain; sequence ELPLSDYPLR…VDFIQELSEV (137 aa). Positions 401 to 581 constitute a dDENN domain; the sequence is VQFGIPPEGS…DNKIMSQWEE (181 aa). The 161-residue stretch at 772-932 folds into the RUN 1 domain; the sequence is LEENTLIASL…DYFCFTSVFT (161 aa). Ser822 carries the phosphoserine modification. A helical transmembrane segment spans residues 916–936; it reads LLSLNAVDYFCFTSVFTTIMI. The region spanning 936-1044 is the PLAT domain; that stretch reads IPYRSVIIPI…DDGSLERILI (109 aa). At Thr1062 the chain carries Phosphothreonine. A phosphoserine mark is found at Ser1068, Ser1076, and Ser1079. One can recognise an RUN 2 domain in the interval 1118 to 1267; it reads TVLLCGENGL…QDFTIVLEGS (150 aa).

The protein belongs to the RAB6IP1 family.

It is found in the membrane. Functionally, guanine nucleotide exchange factor (GEF) which may activate RAB39A and/or RAB39B. Promotes the exchange of GDP to GTP, converting inactive GDP-bound Rab proteins into their active GTP-bound form. The chain is DENN domain-containing protein 5B (DENND5B) from Homo sapiens (Human).